Reading from the N-terminus, the 269-residue chain is Cyclic AMP-dependent transcription factor ATF-1 (269 aa).

The interval 1–90 is disordered; the sequence is MEDSHKSNTT…GEGENPSISA (90 aa). Residues 9 to 18 are compositionally biased toward polar residues; it reads TTETASQPGS. The 60-residue stretch at 31-90 folds into the KID domain; that stretch reads QVSSLSESEESQDSSDSIGSSQKAHGILARRPSYRKILKDLSSEDTRGRKGEGENPSISA. Serine 63 is subject to Phosphoserine; by CaMK1, CDK3, RPS6KA4 and RPS6KA5. Residues 67 to 83 are compositionally biased toward basic and acidic residues; the sequence is ILKDLSSEDTRGRKGEG. At serine 196 the chain carries Phosphoserine; by HIPK2. Residue lysine 206 forms a Glycyl lysine isopeptide (Lys-Gly) (interchain with G-Cter in SUMO2) linkage. Residues 211–269 enclose the bZIP domain; it reads QLRREIRLMKNREAARECRRKKKEYVKCLENRVAVLENQNKTLIEELKTLKDLYSHKSV. The segment at 213–237 is basic motif; the sequence is RREIRLMKNREAARECRRKKKEYVK. The interval 239–260 is leucine-zipper; sequence LENRVAVLENQNKTLIEELKTL.

Belongs to the bZIP family. ATF subfamily. As to quaternary structure, binds DNA as a dimer. Interacts with HIPK2 and CDK3. Interacts with MOTS-c, a peptide produced by the mitochondrially encoded 12S rRNA MT-RNR1; the interaction occurs in the nucleus following metabolic stress. Post-translationally, phosphorylated at Ser-196 by HIPK2 in response to genotoxic stress. This phosphorylation promotes transcription repression of FTH1 and other antioxidant detoxification genes. The CDK3-mediated phosphorylation at Ser-63 promotes its transactivation and transcriptional activities. Phosphorylated at Ser-63 by RPS6KA4 and RPS6KA5 in response to mitogenic or stress stimuli.

Its subcellular location is the nucleus. Functionally, binds the cAMP response element (CRE) (consensus: 5'-GTGACGT[AC][AG]-3'), a sequence present in many viral and cellular promoters. Binds to the Tax-responsive element (TRE) of HTLV-I. Mediates PKA-induced stimulation of CRE-reporter genes. Represses the expression of FTH1 and other antioxidant detoxification genes. Triggers cell proliferation and transformation. The sequence is that of Cyclic AMP-dependent transcription factor ATF-1 (Atf1) from Mus musculus (Mouse).